The following is a 601-amino-acid chain: MEGSDFLLAGVLFLFAAVAAVPLASRLGIGAVLGYLLAGIAIGPWGLGFISDVDEILHFSELGVVFLMFIIGLELNPSKLWQLRRSIFGVGAAQVLLSSALLAGLLMLTHFSWQAAVVGGIGLAMSSTAMALQLMREKGMNRSESGQLGFSVLLFQDLAVIPALALVPLLAGSADEHFDWMKIGMKVLAFVGMLIGGRYLLRPVFRFIAASGVREVFTAATLLLVLGSALFMDALGLSMALGTFIAGVLLAESEYRHELETAIDPFKGLLLGLFFISVGMSLNLGVLYTHLLWVVISVVVLVAVKILVLYLLARLYGVRSSERMQFAGVLSQGGEFAFVLFSTASSQRLFQGDQMALLLVTVTLSMMTTPLLMKLVDKWLSRQFNGPEEEDEKPWVNDDKPQVIVVGFGRFGQVIGRLLMANKMRITVLERDISAVNLMRKYGYKVYYGDATQVDLLRSAGAEAAESIVITCNEPEDTMKLVEICQQHFPHLHILARARGRVEAHELLQAGVTQFSRETFSSALELGRKTLVTLGMHPHQAQRAQLHFRRLDMRMLRELIPMHADTVQISRAREARRELEEIFQREMQQERRQLDGWDEFE.

13 consecutive transmembrane segments (helical) span residues 4-24, 29-49, 55-75, 87-107, 115-135, 152-172, 177-197, 207-227, 230-250, 268-288, 291-311, 324-344, and 356-376; these read SDFL…VPLA, IGAV…GLGF, EILH…GLEL, IFGV…GLLM, AAVV…LQLM, VLLF…LLAG, HFDW…LIGG, FIAA…LVLG, LFMD…GVLL, GLLL…GVLY, LLWV…VLYL, MQFA…FSTA, and ALLL…MKLV. One can recognise an RCK N-terminal domain in the interval 400–519; it reads KPQVIVVGFG…AGVTQFSRET (120 aa).

It belongs to the monovalent cation:proton antiporter 2 (CPA2) transporter (TC 2.A.37) family. KefB subfamily. Interacts with the regulatory subunit KefG.

The protein resides in the cell inner membrane. Pore-forming subunit of a potassium efflux system that confers protection against electrophiles. Catalyzes K(+)/H(+) antiport. The polypeptide is Glutathione-regulated potassium-efflux system protein KefB (Escherichia coli O81 (strain ED1a)).